The primary structure comprises 731 residues: MSRGKKTVERVVELMKDPKHIRNIGIVAHIDHGKTTLSDNLLAGAGIISEELAGKQLFMDSDAEEQARGITIDASNVSMVHEVEGQDYLINMIDTPGHVDFGGDVTRAMRAVDGAVVLVDAVEGTMPQTETVLRQALKEQVRPVLFINKVDRLVNELKVDETEMQIRLGKVIDKVNKLIKGMNEDLYNNGWKLDASKGTVAFGSALYNWAVSVPYMKKGGVSFKDVFEKCRAGDMKYLAKNSPLYEVVLDMVVHHLPNPLEAQPRRVNVIWHGDHSTKEGKAMLACDPNGPATMMVTDISFDPHAGEVATGRLFSGTLRRGDGLYVMGSAKKENRLQQVGIFMGPKRVEVEEIVAGNIAAVTGLKDAIVGSTVTSLMEMSPFESLKHYSEPVMTVAVEAKNMKDLPKLVEVLRQVAKEDPTLGIAINEETGEHLISGMGELHLEIVTGRIKRDKGVEIVTSEPIVVYRETVTGKVEDVEGKSPNRHNRFYFTLEPLPEEIVNLIKAGEITMNQQAIERRDVLLKAGMDKDEAKNVKHIKGTNMLIDMTKGIQYLNETMELIIEGINEALAGGPLADEPVQNLKMTLTDVKLHEDAIHRGPAQVIPAVRGAIKGGMLIAGDSLLEPVQKIQISVPMDQMGAATSQIQGRRGQVFDMQSEGDTITVVGKAPVAELFGFAGDIRSATEGRAMWNTEFAGFELVPNNLVKDVVVAIRKRKGLKEQMPTPSDYLSV.

The region spanning 19 to 260 is the tr-type G domain; that stretch reads KHIRNIGIVA…MVVHHLPNPL (242 aa). GTP is bound by residues 28–35, 94–98, and 148–151; these read AHIDHGKT, DTPGH, and NKVD. H597 bears the Diphthamide mark.

Belongs to the TRAFAC class translation factor GTPase superfamily. Classic translation factor GTPase family. EF-G/EF-2 subfamily.

The protein resides in the cytoplasm. Catalyzes the GTP-dependent ribosomal translocation step during translation elongation. During this step, the ribosome changes from the pre-translocational (PRE) to the post-translocational (POST) state as the newly formed A-site-bound peptidyl-tRNA and P-site-bound deacylated tRNA move to the P and E sites, respectively. Catalyzes the coordinated movement of the two tRNA molecules, the mRNA and conformational changes in the ribosome. The chain is Elongation factor 2 from Methanoregula boonei (strain DSM 21154 / JCM 14090 / 6A8).